Reading from the N-terminus, the 363-residue chain is tRNA/tmRNA (uracil-C(5))-methyltransferase (363 aa).

S-adenosyl-L-methionine-binding residues include Gln187, Tyr215, Asn220, Glu236, and Asp296. The active-site Nucleophile is Cys321. Glu355 functions as the Proton acceptor in the catalytic mechanism.

It belongs to the class I-like SAM-binding methyltransferase superfamily. RNA M5U methyltransferase family. TrmA subfamily.

The enzyme catalyses uridine(54) in tRNA + S-adenosyl-L-methionine = 5-methyluridine(54) in tRNA + S-adenosyl-L-homocysteine + H(+). The catalysed reaction is uridine(341) in tmRNA + S-adenosyl-L-methionine = 5-methyluridine(341) in tmRNA + S-adenosyl-L-homocysteine + H(+). Dual-specificity methyltransferase that catalyzes the formation of 5-methyluridine at position 54 (m5U54) in all tRNAs, and that of position 341 (m5U341) in tmRNA (transfer-mRNA). The protein is tRNA/tmRNA (uracil-C(5))-methyltransferase of Pseudomonas paraeruginosa (strain DSM 24068 / PA7) (Pseudomonas aeruginosa (strain PA7)).